Consider the following 261-residue polypeptide: Type III pantothenate kinase (261 aa).

Position 6 to 13 (6 to 13) interacts with ATP; it reads DAGNTNVV. Substrate is bound at residue 108–111; the sequence is GADR. Residue aspartate 110 is the Proton acceptor of the active site. Aspartate 130 contacts K(+). Threonine 133 contacts ATP. Threonine 185 lines the substrate pocket.

It belongs to the type III pantothenate kinase family. As to quaternary structure, homodimer. NH4(+) is required as a cofactor. The cofactor is K(+).

It is found in the cytoplasm. The catalysed reaction is (R)-pantothenate + ATP = (R)-4'-phosphopantothenate + ADP + H(+). Its pathway is cofactor biosynthesis; coenzyme A biosynthesis; CoA from (R)-pantothenate: step 1/5. In terms of biological role, catalyzes the phosphorylation of pantothenate (Pan), the first step in CoA biosynthesis. The chain is Type III pantothenate kinase from Rhodospirillum centenum (strain ATCC 51521 / SW).